Consider the following 276-residue polypeptide: Pantothenate synthetase (276 aa).

26 to 33 (MGFLHEGH) is an ATP binding site. The Proton donor role is filled by histidine 33. Glutamine 57 contacts (R)-pantoate. Glutamine 57 is a beta-alanine binding site. 142-145 (GLKD) contacts ATP. (R)-pantoate is bound at residue glutamine 148. ATP is bound by residues isoleucine 171 and 179–182 (KSSR).

It belongs to the pantothenate synthetase family. As to quaternary structure, homodimer.

The protein resides in the cytoplasm. It catalyses the reaction (R)-pantoate + beta-alanine + ATP = (R)-pantothenate + AMP + diphosphate + H(+). It participates in cofactor biosynthesis; (R)-pantothenate biosynthesis; (R)-pantothenate from (R)-pantoate and beta-alanine: step 1/1. Its function is as follows. Catalyzes the condensation of pantoate with beta-alanine in an ATP-dependent reaction via a pantoyl-adenylate intermediate. This chain is Pantothenate synthetase, found in Exiguobacterium sibiricum (strain DSM 17290 / CCUG 55495 / CIP 109462 / JCM 13490 / 255-15).